The chain runs to 185 residues: Lysozyme g (185 aa).

Gln1 is modified (pyrrolidone carboxylic acid). 2 disulfide bridges follow: Cys4/Cys60 and Cys18/Cys29. Residues Glu73 and Asp86 contribute to the active site.

It belongs to the glycosyl hydrolase 23 family.

It localises to the secreted. It catalyses the reaction Hydrolysis of (1-&gt;4)-beta-linkages between N-acetylmuramic acid and N-acetyl-D-glucosamine residues in a peptidoglycan and between N-acetyl-D-glucosamine residues in chitodextrins.. The polypeptide is Lysozyme g (Casuarius casuarius (Southern cassowary)).